The sequence spans 146 residues: Putative pre-16S rRNA nuclease (146 aa).

Belongs to the YqgF nuclease family.

The protein localises to the cytoplasm. Its function is as follows. Could be a nuclease involved in processing of the 5'-end of pre-16S rRNA. In Mycoplasmopsis pulmonis (strain UAB CTIP) (Mycoplasma pulmonis), this protein is Putative pre-16S rRNA nuclease.